The chain runs to 363 residues: Galanin receptor 2a (363 aa).

The Extracellular portion of the chain corresponds to Met1–Leu23. Residues Ile24–Ile44 form a helical membrane-spanning segment. The Cytoplasmic portion of the chain corresponds to Arg45 to Thr54. Residues Asn55–Leu75 traverse the membrane as a helical segment. Over Gln76–Ala94 the chain is Extracellular. Residues Cys92 and Cys169 are joined by a disulfide bond. The chain crosses the membrane as a helical span at residues Val95–Leu115. Topologically, residues Asp116–Asn135 are cytoplasmic. The chain crosses the membrane as a helical span at residues Ala136 to Ser156. Residues Tyr157 to Gln179 lie on the Extracellular side of the membrane. A helical membrane pass occupies residues Ala180–Thr200. At Tyr201–Lys230 the chain is on the cytoplasmic side. The chain crosses the membrane as a helical span at residues Met231–Leu251. Over Cys252–Arg268 the chain is Extracellular. Residues Ile269 to Val289 traverse the membrane as a helical segment. Residues Ser290–Thr363 are Cytoplasmic-facing.

The protein belongs to the G-protein coupled receptor 1 family. In terms of tissue distribution, expressed in neurons in the ventral area of the interpeduncular nucleus (IPN) where expression often overlaps with spx1.

Its subcellular location is the membrane. Receptor for the hormone galanin. Receptor for the hormones spexin-1 and spexin-2. The sequence is that of Galanin receptor 2a from Danio rerio (Zebrafish).